Here is a 364-residue protein sequence, read N- to C-terminus: Putative glutamate--cysteine ligase 2-2 (364 aa).

The protein belongs to the glutamate--cysteine ligase type 2 family. YbdK subfamily.

The catalysed reaction is L-cysteine + L-glutamate + ATP = gamma-L-glutamyl-L-cysteine + ADP + phosphate + H(+). Its function is as follows. ATP-dependent carboxylate-amine ligase which exhibits weak glutamate--cysteine ligase activity. The protein is Putative glutamate--cysteine ligase 2-2 of Mycobacterium sp. (strain JLS).